The sequence spans 500 residues: Pyruvate kinase 1 (500 aa).

Ser2 is modified (N-acetylserine). Phosphoserine occurs at positions 9 and 16. At Thr31 the chain carries Phosphothreonine. Arg49 serves as a coordination point for substrate. Asn51 and Ser53 together coordinate K(+). ATP is bound at residue 51–54; that stretch reads NFSH. Ser70 is subject to Phosphoserine. Positions 84 and 85 each coordinate K(+). Arg91 lines the ATP pocket. Residues Lys119, Lys124, Lys161, Lys164, and Lys166 each participate in a glycyl lysine isopeptide (Lys-Gly) (interchain with G-Cter in URM1) cross-link. ATP is bound at residue Lys177. Thr184 is modified (phosphothreonine). Lys204 participates in a covalent cross-link: Glycyl lysine isopeptide (Lys-Gly) (interchain with G-Cter in ubiquitin). Phosphoserine is present on Ser213. Lys240 provides a ligand contact to substrate. Glu242 lines the Mn(2+) pocket. Residue Lys255 forms a Glycyl lysine isopeptide (Lys-Gly) (interchain with G-Cter in ubiquitin) linkage. Substrate-binding residues include Gly265 and Asp266. Residue Asp266 coordinates Mn(2+). Lys292 is covalently cross-linked (Glycyl lysine isopeptide (Lys-Gly) (interchain with G-Cter in URM1)). Thr298 is a binding site for substrate. Position 316 is a phosphoserine (Ser316). Lys394 participates in a covalent cross-link: Glycyl lysine isopeptide (Lys-Gly) (interchain with G-Cter in URM1). Residue 402 to 407 participates in beta-D-fructose 1,6-bisphosphate binding; it reads STSGTT. Cys418 bears the Cysteine persulfide mark. Lys446 participates in a covalent cross-link: Glycyl lysine isopeptide (Lys-Gly) (interchain with G-Cter in ubiquitin); alternate. Lys446 participates in a covalent cross-link: Glycyl lysine isopeptide (Lys-Gly) (interchain with G-Cter in URM1); alternate. A Phosphoserine modification is found at Ser450. Residues Trp452 and Arg459 each coordinate beta-D-fructose 1,6-bisphosphate. Phosphothreonine is present on Thr478. Residue Gly484 coordinates beta-D-fructose 1,6-bisphosphate.

Belongs to the pyruvate kinase family. In terms of assembly, homotetramer. The cofactor is Mg(2+). Requires K(+) as cofactor. Conjugated to URM1, a ubiquitin-like protein, in response to oxidative stresses. The attachment of URM1 to lysine residues exclusively depends on the presence of a peroxidatic cysteine in the target protein, with low specificity for the particular residue, motif, or structural context at which urmylation can occur. The URM1-conjugation reaction is mechanistically and directly coupled to the process of cysteine persulfidation, transfering the sulfur atom of the URM1 thiocarboxyl group to redox-active cysteine residues in the target protein if it is exposed to oxidative conditions. Post-translationally, persulfidated on specific redox-active cysteine residues. Persulfidation (also called protein S-sulfhydration) may provide a molecular mechanism that enables cells to protect vulnerable cysteine residues from reactive oxygen species (ROS) under stress conditions.

The catalysed reaction is pyruvate + ATP = phosphoenolpyruvate + ADP + H(+). It participates in carbohydrate degradation; glycolysis; pyruvate from D-glyceraldehyde 3-phosphate: step 5/5. With respect to regulation, the activity is regulated by glucose levels. Activated by fructose-1,6-bisphosphate. This chain is Pyruvate kinase 1 (CDC19), found in Saccharomyces cerevisiae (strain ATCC 204508 / S288c) (Baker's yeast).